The primary structure comprises 207 residues: Large ribosomal subunit protein uL4 (207 aa).

The disordered stretch occupies residues K52 to Q75. Residues G60–G71 show a composition bias toward basic residues.

This sequence belongs to the universal ribosomal protein uL4 family. Part of the 50S ribosomal subunit.

In terms of biological role, one of the primary rRNA binding proteins, this protein initially binds near the 5'-end of the 23S rRNA. It is important during the early stages of 50S assembly. It makes multiple contacts with different domains of the 23S rRNA in the assembled 50S subunit and ribosome. Forms part of the polypeptide exit tunnel. The polypeptide is Large ribosomal subunit protein uL4 (Limosilactobacillus fermentum (strain NBRC 3956 / LMG 18251) (Lactobacillus fermentum)).